The primary structure comprises 280 residues: Nucleotide-binding protein Dgeo_0723 (280 aa).

ATP is bound at residue 8 to 15; sequence GLSGSGKS. 57 to 60 serves as a coordination point for GTP; that stretch reads DART.

The protein belongs to the RapZ-like family.

Functionally, displays ATPase and GTPase activities. In Deinococcus geothermalis (strain DSM 11300 / CIP 105573 / AG-3a), this protein is Nucleotide-binding protein Dgeo_0723.